A 121-amino-acid polypeptide reads, in one-letter code: uncharacterized protein (121 aa).

3 helical membrane passes run 26-46 (YACS…AVAT), 57-77 (SIPL…SVLI), and 90-110 (SFCF…LLCV).

Its subcellular location is the membrane. This is an uncharacterized protein from Saccharomyces cerevisiae (strain ATCC 204508 / S288c) (Baker's yeast).